We begin with the raw amino-acid sequence, 357 residues long: 3'(2'),5'-bisphosphate nucleotidase (357 aa).

The active-site Proton acceptor is aspartate 49. Residues glutamate 72, aspartate 142, isoleucine 144, and aspartate 145 each coordinate Mg(2+). Catalysis depends on threonine 147, which acts as the Proton acceptor. Threonine 147, histidine 241, serine 264, lysine 267, arginine 281, and aspartate 294 together coordinate adenosine 3',5'-bisphosphate. AMP is bound by residues histidine 241, serine 264, lysine 267, arginine 281, and aspartate 294. Mg(2+) is bound at residue aspartate 294.

This sequence belongs to the inositol monophosphatase superfamily. It depends on Mg(2+) as a cofactor.

It localises to the cytoplasm. Its subcellular location is the nucleus. It catalyses the reaction 3'-phosphoadenylyl sulfate + H2O = adenosine 5'-phosphosulfate + phosphate. The catalysed reaction is adenosine 3',5'-bisphosphate + H2O = AMP + phosphate. The enzyme catalyses adenosine 2',5'-bisphosphate + H2O = AMP + phosphate. With respect to regulation, phosphatase activity is very sensitive to lithium and moderately sensitive to sodium. The inhibitory effects of lithium and sodium are overcome by high concentrations of potassium. Lithium exerts its inhibitory action by blocking the products of the PAP hydrolysis at the active site. Phosphatase that converts adenosine 3'-phosphate 5'-phosphosulfate (PAPS) to adenosine 5'-phosphosulfate (APS) and 3'(2')-phosphoadenosine 5'-phosphate (PAP) to AMP. May regulate the flux of sulfur in the sulfur-activation pathway by converting PAPS to APS. Involved in salt tolerance. Confers resistance to lithium. Shows no activity on inositol mono- and diphosphates, 3'-AMP, AMP, nicotinamide adenine dinucleotide phosphate (NADP), and p-nitrophenylphosphate. This chain is 3'(2'),5'-bisphosphate nucleotidase (MET22), found in Saccharomyces cerevisiae (strain ATCC 204508 / S288c) (Baker's yeast).